The following is a 386-amino-acid chain: tRNA N6-adenosine threonylcarbamoyltransferase (386 aa).

Residues histidine 112 and histidine 116 each contribute to the Fe cation site. Substrate contacts are provided by residues leucine 134–glycine 138, aspartate 167, glycine 180, and asparagine 322. Position 350 (aspartate 350) interacts with Fe cation.

It belongs to the KAE1 / TsaD family. It depends on Fe(2+) as a cofactor.

It is found in the cytoplasm. The enzyme catalyses L-threonylcarbamoyladenylate + adenosine(37) in tRNA = N(6)-L-threonylcarbamoyladenosine(37) in tRNA + AMP + H(+). In terms of biological role, required for the formation of a threonylcarbamoyl group on adenosine at position 37 (t(6)A37) in tRNAs that read codons beginning with adenine. Is involved in the transfer of the threonylcarbamoyl moiety of threonylcarbamoyl-AMP (TC-AMP) to the N6 group of A37, together with TsaE and TsaB. TsaD likely plays a direct catalytic role in this reaction. The sequence is that of tRNA N6-adenosine threonylcarbamoyltransferase from Rickettsia akari (strain Hartford).